The chain runs to 1733 residues: Probable nuclear antigen (1733 aa).

Disordered stretches follow at residues 1–41, 71–394, 437–506, 520–548, 882–907, 993–1141, 1223–1242, 1348–1475, 1585–1608, and 1630–1665; these read MNLF…THFT, PHPP…EQQV, AGAG…EGAQ, APAAAGDEDGPQRGAEPPAVGRAVPEGGA, LGGGGGGGQQRGSGVRSGPESEGAAL, AGGP…EDAA, PERVLGGHGVPDVRQRRGHA, GAGP…GRAG, SGGGGAAAAGRRDRPGGGGGWGSG, and PRRRPGLTDRVPPRGGPSPRGCRGAGRAGGGGRGGC. Positions 21-31 are enriched in basic residues; sequence DHHHQQHHHHP. Basic and acidic residues predominate over residues 77–97; sequence PQDHHRPTPARDHRDPRDHLP. Over residues 113-131 the composition is skewed to low complexity; sequence TTTTTIKDPQHPQDPLLLP. Over residues 135–147 the composition is skewed to basic and acidic residues; it reads LQEEDPHLLRPTR. A compositionally biased stretch (pro residues) spans 179 to 189; it reads GGGPPSPPPRP. Low complexity predominate over residues 190–201; that stretch reads STSSSSSHQGPP. Over residues 202–220 the composition is skewed to pro residues; sequence STRPPPPQRPPPRWPPPSP. The segment covering 227-240 has biased composition (polar residues); it reads RAGSENTAQTLFSH. Over residues 272–299 the composition is skewed to pro residues; the sequence is PPPSPPPRPPPPLPPPPPPPPPPQPPPA. Basic residues predominate over residues 316-326; the sequence is GGRRRGGKRRR. A compositionally biased stretch (acidic residues) spans 336–354; it reads DAEEEEDGDGDEDEDEDRA. A compositionally biased stretch (basic and acidic residues) spans 355–364; it reads EGEGREDGGE. 3 stretches are compositionally biased toward gly residues: residues 365–374, 454–466, and 479–494; these read GPRGAGGGAG, GAPGGGADAGLEG, and GGDGARGQHQRGGLGV. Residues 495-506 show a composition bias toward low complexity; it reads GLQQRRGAEGAQ. Gly residues predominate over residues 882–892; the sequence is LGGGGGGGQQR. Residues 893–907 are compositionally biased toward low complexity; sequence GSGVRSGPESEGAAL. Composition is skewed to gly residues over residues 993–1004 and 1027–1043; these read AGGPGAGEAGGG and AGRGLRGPGPRGGLGEP. 2 stretches are compositionally biased toward basic and acidic residues: residues 1078–1087 and 1100–1112; these read GAGDEGDRVR and RVAEREQRGRHLL. Residues 1116 to 1127 are compositionally biased toward gly residues; it reads GPEGGRGAGGRG. A compositionally biased stretch (gly residues) spans 1385 to 1407; that stretch reads GPGGLRGRGRGGRGGGGGGGGRG. Basic residues-rich tracts occupy residues 1408-1420 and 1444-1453; these read PRGRGGRRRRRWR and RGGRGGRGGR. The segment covering 1454–1474 has biased composition (gly residues); it reads GRGGGRAPRGGGGGPGGGGRA. The segment covering 1652–1665 has biased composition (gly residues); sequence RGAGRAGGGGRGGC.

The chain is Probable nuclear antigen from Sus scrofa (Pig).